A 242-amino-acid polypeptide reads, in one-letter code: Lactate utilization protein A 1 (242 aa).

The protein belongs to the LutA/YkgE family.

Its function is as follows. Is involved in L-lactate degradation and allows cells to grow with lactate as the sole carbon source. The chain is Lactate utilization protein A 1 from Bacillus anthracis (strain CDC 684 / NRRL 3495).